The following is a 103-amino-acid chain: MQLYTYLYLLVPLVTFHLILGTGTLDHGGALTERRSTDATALKPEPVLQKSAARSTDDNGKDRLTQMKRILKKRGNNPRADEEYLKFIEEQRKQGKLDPTKFP.

Positions methionine 1–glycine 21 are cleaved as a signal peptide. A propeptide spanning residues threonine 22–arginine 79 is cleaved from the precursor. The disordered stretch occupies residues arginine 34 to glutamate 83. The span at serine 55 to threonine 65 shows a compositional bias: basic and acidic residues. Glutamate 82, glutamate 83, and glutamate 89 each carry 4-carboxyglutamate.

Belongs to the conotoxin B superfamily. Ca(2+) serves as cofactor. Requires Mg(2+) as cofactor. Expressed by the venom duct.

It localises to the secreted. Its function is as follows. Conantokins inhibit N-methyl-D-aspartate (NMDA) receptors. This toxin has the highest potency for the NR2B/GRIN2B subunit (IC(50)=0.11 uM), followed by NR2D/GRIN2D (IC(50)=0.48 uM), NR2A/GRIN2A (IC(50)=2.1 uM), and NR2C/GRIN2C (IC(50)=6.1 uM) subunits when tested on rat receptors. The polypeptide is Conantokin R1-A (Conus rolani (Cone snail)).